A 276-amino-acid chain; its full sequence is 1H-3-hydroxy-4-oxoquinaldine 2,4-dioxygenase (276 aa).

One can recognise an AB hydrolase-1 domain in the interval P28–R150. Substrate contacts are provided by residues W36 to H38, H100 to S101, and W160. Catalysis depends on H251, which acts as the Proton donor/acceptor.

The protein belongs to the AB hydrolase superfamily. The cofactor is None. Contrary to most other dioxygenases, this enzyme does not require a cofactor for catalysis..

The catalysed reaction is 3-hydroxy-2-methyl-1H-quinolin-4-one + O2 = N-acetylanthranilate + CO + H(+). In terms of biological role, ring-cleaving dioxygenase involved in quinaldine degradation and utilization. The protein is 1H-3-hydroxy-4-oxoquinaldine 2,4-dioxygenase (hod) of Paenarthrobacter nitroguajacolicus (Arthrobacter nitroguajacolicus).